We begin with the raw amino-acid sequence, 271 residues long: 3-methyl-2-oxobutanoate hydroxymethyltransferase (271 aa).

2 residues coordinate Mg(2+): Asp51 and Asp90. 3-methyl-2-oxobutanoate is bound by residues 51–52, Asp90, and Lys118; that span reads DS. Mg(2+) is bound at residue Glu120. Glu186 acts as the Proton acceptor in catalysis.

The protein belongs to the PanB family. As to quaternary structure, homodecamer; pentamer of dimers. Mg(2+) serves as cofactor.

The protein localises to the cytoplasm. It carries out the reaction 3-methyl-2-oxobutanoate + (6R)-5,10-methylene-5,6,7,8-tetrahydrofolate + H2O = 2-dehydropantoate + (6S)-5,6,7,8-tetrahydrofolate. It participates in cofactor biosynthesis; (R)-pantothenate biosynthesis; (R)-pantoate from 3-methyl-2-oxobutanoate: step 1/2. In terms of biological role, catalyzes the reversible reaction in which hydroxymethyl group from 5,10-methylenetetrahydrofolate is transferred onto alpha-ketoisovalerate to form ketopantoate. This is 3-methyl-2-oxobutanoate hydroxymethyltransferase from Xanthomonas axonopodis pv. citri (strain 306).